Here is a 256-residue protein sequence, read N- to C-terminus: Follistatin-related protein 3 (256 aa).

Positions 1–23 (MRSGALWPLLWGALVWTVGSVGA) are cleaved as a signal peptide. The TB domain occupies 34 to 105 (GVCWLQQGRE…SCDGVECGPG (72 aa)). Disulfide bonds link C36/C59, C46/C90, C60/C93, C97/C108, C102/C117, C119/C151, C123/C144, and C133/C165. N-linked (GlcNAc...) asparagine glycosylation is present at N71. The 21-residue stretch at 97–117 (CDGVECGPGKACRMLGGRPHC) folds into the Follistatin-like 1 domain. Kazal-like domains follow at residues 111-167 (LGGR…RCQK) and 187-243 (SAHC…ICTG). Positions 168–191 (SCAQVVCPRPQSCLVDQTGSAHCV) constitute a Follistatin-like 2 domain. Cystine bridges form between C193–C227, C198–C220, and C209–C241. Residue N213 is glycosylated (N-linked (GlcNAc...) asparagine).

In terms of assembly, interacts with INHBA and INHBB. Interacts with FN1. Interacts with ADAM12. Interacts with MLLT10; the interaction enhances MLLT10 in vitro transcriptional activity and self-association. Interacts with MSTN. In terms of tissue distribution, abundantly expressed in heart, lung, kidney and testis. Continuously expressed in embryonic heart.

It localises to the secreted. Its subcellular location is the nucleus. Functionally, the secreted form is a binding and antagonizing protein for members of the TGF-beta family, such as activin, BMP2 and MSTN. Inhibits activin A-, activin B-, BMP2- and MSDT-induced cellular signaling; more effective on activin A than on activin B. Involved in bone formation; inhibits osteoclast differentiation. Involved in hematopoiesis; involved in differentiation of hemopoietic progenitor cells, increases hematopoietic cell adhesion to fibronectin and seems to contribute to the adhesion of hematopoietic precursor cells to the bone marrow stroma. The nuclear form is probably involved in transcriptional regulation via interaction with MLLT10. This chain is Follistatin-related protein 3 (Fstl3), found in Mus musculus (Mouse).